The chain runs to 166 residues: Large ribosomal subunit protein uL18c (166 aa).

A chloroplast-targeting transit peptide spans 1–44 (MAAATSLSFFHSTLASSSSSSVQQLSLPPKFVNFRPQTLPLIQA).

The protein belongs to the universal ribosomal protein uL18 family. Component of the chloroplast large ribosomal subunit (LSU). Mature 70S chloroplast ribosomes of higher plants consist of a small (30S) and a large (50S) subunit. The 30S small subunit contains 1 molecule of ribosomal RNA (16S rRNA) and 24 different proteins. The 50S large subunit contains 3 rRNA molecules (23S, 5S and 4.5S rRNA) and 33 different proteins.

It localises to the plastid. The protein localises to the chloroplast. In terms of biological role, component of the chloroplast ribosome (chloro-ribosome), a dedicated translation machinery responsible for the synthesis of chloroplast genome-encoded proteins, including proteins of the transcription and translation machinery and components of the photosynthetic apparatus. This Spinacia oleracea (Spinach) protein is Large ribosomal subunit protein uL18c (RPL18).